Reading from the N-terminus, the 84-residue chain is Anaphase-promoting complex subunit 11 (84 aa).

Residues Cys-23, Cys-26, Cys-34, Cys-37, Cys-44, Cys-51, His-53, His-56, His-58, Cys-59, Cys-73, and Cys-76 each contribute to the Zn(2+) site. The RING-type zinc-finger motif lies at 34-77; sequence CPDCKVPGDDCPLVWGQCSHCFHMHCILKWLNAQQVQQHCPMCR.

Belongs to the RING-box family. In terms of assembly, the mammalian APC/C is composed at least of 14 distinct subunits ANAPC1, ANAPC2, CDC27/APC3, ANAPC4, ANAPC5, CDC16/APC6, ANAPC7, CDC23/APC8, ANAPC10, ANAPC11, CDC26/APC12, ANAPC13, ANAPC15 and ANAPC16 that assemble into a complex of at least 19 chains with a combined molecular mass of around 1.2 MDa; APC/C interacts with FZR1 and FBXO5. Interacts with the cullin domain of ANAPC2. Interacts with UBE2D2. Auto-ubiquitinated.

The protein localises to the cytoplasm. The protein resides in the nucleus. Its pathway is protein modification; protein ubiquitination. Together with the cullin protein ANAPC2, constitutes the catalytic component of the anaphase promoting complex/cyclosome (APC/C), a cell cycle-regulated E3 ubiquitin ligase that controls progression through mitosis and the G1 phase of the cell cycle. The APC/C complex acts by mediating ubiquitination and subsequent degradation of target proteins: it mainly mediates the formation of 'Lys-11'-linked polyubiquitin chains and, to a lower extent, the formation of 'Lys-48'- and 'Lys-63'-linked polyubiquitin chains. The APC/C complex catalyzes assembly of branched 'Lys-11'-/'Lys-48'-linked branched ubiquitin chains on target proteins. May recruit the E2 ubiquitin-conjugating enzymes to the complex. In Bos taurus (Bovine), this protein is Anaphase-promoting complex subunit 11 (ANAPC11).